A 253-amino-acid chain; its full sequence is 5'-nucleotidase SurE (253 aa).

4 residues coordinate a divalent metal cation: D8, D9, S40, and N92.

Belongs to the SurE nucleotidase family. A divalent metal cation is required as a cofactor.

The protein localises to the cytoplasm. It carries out the reaction a ribonucleoside 5'-phosphate + H2O = a ribonucleoside + phosphate. Nucleotidase that shows phosphatase activity on nucleoside 5'-monophosphates. In Hyphomonas neptunium (strain ATCC 15444), this protein is 5'-nucleotidase SurE.